A 501-amino-acid chain; its full sequence is Cystine/glutamate transporter (501 aa).

Over 1-43 the chain is Cytoplasmic; that stretch reads MVRKPVVSTISKGGYLQGNVNGRLPSLGNKEPPGQEKVQLKRK. A Phosphoserine modification is found at serine 26. A helical membrane pass occupies residues 44 to 64; the sequence is VTLLRGVSIIIGTIIGAGIFI. Topologically, residues 65–74 are extracellular; the sequence is SPKGVLQNTG. The helical transmembrane segment at 75–95 threads the bilayer; it reads SVGMSLTIWTVCGVLSLFGAL. Topologically, residues 96–101 are cytoplasmic; sequence SYAELG. Residues 102-116 lie within the membrane without spanning it; sequence TTIKKSGGHYTYILE. Residues 117-130 are Cytoplasmic-facing; that stretch reads VFGPLPAFVRVWVE. The helical transmembrane segment at 131–150 threads the bilayer; it reads LLIIRPAATAVISLAFGRYI. An L-glutamate-binding site is contributed by arginine 135. Over 151–163 the chain is Extracellular; the sequence is LEPFFIQCEIPEL. The chain crosses the membrane as a helical span at residues 164 to 179; that stretch reads AIKLITAVGITVVMVL. At 180–193 the chain is on the cytoplasmic side; it reads NSMSVSWSARIQIF. The chain crosses the membrane as a helical span at residues 194–210; it reads LTFCKLTAILIIIVPGV. Residues 211–234 are Extracellular-facing; the sequence is MQLIKGQTQNFKDAFSGRDSSITR. Residues 235 to 255 traverse the membrane as a helical segment; that stretch reads LPLAFYYGMYAYAGWFYLNFV. Residue tyrosine 244 coordinates L-glutamate. Residues 256–265 lie on the Cytoplasmic side of the membrane; sequence TEEVENPEKT. A helical transmembrane segment spans residues 266–286; sequence IPLAICISMAIVTIGYVLTNV. Residues 287 to 317 lie on the Extracellular side of the membrane; it reads AYFTTINAEELLLSNAVAVTFSERLLGNFSL. Residue asparagine 314 is glycosylated (N-linked (GlcNAc...) asparagine). The chain crosses the membrane as a helical span at residues 318-338; the sequence is AVPIFVALSCFGSMNGGVFAV. Over 339-364 the chain is Cytoplasmic; that stretch reads SRLFYVASREGHLPEILSMIHVRKHT. A helical transmembrane segment spans residues 365-385; sequence PLPAVIVLHPLTMIMLFSGDL. Residues 386 to 387 lie on the Extracellular side of the membrane; the sequence is DS. Residues 388–408 traverse the membrane as a helical segment; it reads LLNFLSFARWLFIGLAVAGLI. Topologically, residues 409 to 422 are cytoplasmic; it reads YLRYKCPDMHRPFK. Residues 423 to 443 form a helical membrane-spanning segment; the sequence is VPLFIPALFSFTCLFMVALSL. Topologically, residues 444–449 are extracellular; sequence YSDPFS. The chain crosses the membrane as a helical span at residues 450-470; that stretch reads TGIGSVITLTGVPAYYLFIIW. Residues 471–501 lie on the Cytoplasmic side of the membrane; sequence DKKPRWFRIMSEKITRTLQIILEVVPEEDKL.

It belongs to the amino acid-polyamine-organocation (APC) superfamily. L-type amino acid transporter (LAT) (TC 2.A.3.8) family. Disulfide-linked heterodimer with the amino acid transport protein SLC3A2/4F2hc; this interaction mediates cell membrane localization.

It is found in the cell membrane. The protein localises to the cell projection. The protein resides in the microvillus membrane. It carries out the reaction L-cystine(out) + L-glutamate(in) = L-cystine(in) + L-glutamate(out). The catalysed reaction is an L-alpha-amino acid(in) + L-kynurenine(out) = an L-alpha-amino acid(out) + L-kynurenine(in). It catalyses the reaction N-acetyl-L-cysteine(out) + L-glutamate(in) = N-acetyl-L-cysteine(in) + L-glutamate(out). Heterodimer with SLC3A2, that functions as an antiporter by mediating the exchange of extracellular anionic L-cystine and intracellular L-glutamate across the cellular plasma membrane. Provides L-cystine for the maintenance of the redox balance between extracellular L-cystine and L-cysteine and for the maintenance of the intracellular levels of glutathione that is essential for cells protection from oxidative stress. The transport is sodium-independent, electroneutral with a stoichiometry of 1:1, and is drove by the high intracellular concentration of L-glutamate and the intracellular reduction of L-cystine. In addition, mediates the import of L-kynurenine leading to anti-ferroptotic signaling propagation required to maintain L-cystine and glutathione homeostasis. Moreover, mediates N-acetyl-L-cysteine uptake into the placenta leading to subsequently down-regulation of pathways associated with oxidative stress, inflammation and apoptosis. In vitro can also transport L-aspartate. May participate in astrocyte and meningeal cell proliferation during development and can provide neuroprotection by promoting glutathione synthesis and delivery from non-neuronal cells such as astrocytes and meningeal cells to immature neurons. Controls the production of pheomelanin pigment directly. In Pongo abelii (Sumatran orangutan), this protein is Cystine/glutamate transporter.